A 156-amino-acid chain; its full sequence is UPF0251 protein Sfum_2819 (156 aa).

The protein belongs to the UPF0251 family.

In Syntrophobacter fumaroxidans (strain DSM 10017 / MPOB), this protein is UPF0251 protein Sfum_2819.